A 131-amino-acid polypeptide reads, in one-letter code: UPF0102 protein RPD_0400 (131 aa).

It belongs to the UPF0102 family.

This is UPF0102 protein RPD_0400 from Rhodopseudomonas palustris (strain BisB5).